The chain runs to 444 residues: E1B 55 kDa protein (444 aa).

The segment at 1–35 (MEQNADMEPDRQVNQRPPRFRARGAGVRGRGRVRR) is disordered. 2 positions are modified to phosphoserine: Ser438 and Ser439.

The protein belongs to the adenoviridae E1B 55 kDa protein family. As to quaternary structure, interacts with host PML-4 and PML-5; this interaction promotes efficient subnuclear targeting of E1B-55K to PML nuclear bodies. Interacts with E4-ORF3 protein. Interacts with E4-ORF6 protein.

It is found in the host nucleus. The protein localises to the host cytoplasm. Functionally, plays a major role to prevent cellular inhibition of viral genome replication. Assembles an SCF-like E3 ubiquitin ligase complex based on the cellular proteins ELOB, ELOC, CUL5 and RBX1, in cooperation with viral E4orf6. This viral RING-type ligase ubiquitinates cellular substrates and targets them to proteasomal degradation: TP53/p53, LIG4, MRE11-RAD50-NBS1 (MRN) complex, ITGA3, DAXX and BLM. E1B-55K probably acts as the substrate-specific adapter of the SCF-like E3 ubiquitin ligase complex. Degradation of host TP53/p53 activity is essential for preventing E1A-induced TP53 accumulation that would otherwise lead to cell apoptosis and growth arrest. E1B-55K also inactivates TP53 transcription-factor activity by binding its transactivation domain. E1B-55K also functions as a SUMO1 E3 ligase for TP53 which causes the latter to be sequestered in promyelocytic leukemia (PML) nuclear bodies thereby contributing to maximal inhibition of TP53 function. The protein is E1B 55 kDa protein of Canis lupus familiaris (Dog).